A 228-amino-acid polypeptide reads, in one-letter code: 7-cyano-7-deazaguanine synthase (228 aa).

ATP is bound at residue 11–21; that stretch reads LSGGLDSATCL. Cys-191, Cys-201, Cys-204, and Cys-207 together coordinate Zn(2+).

This sequence belongs to the QueC family. Zn(2+) serves as cofactor.

The enzyme catalyses 7-carboxy-7-deazaguanine + NH4(+) + ATP = 7-cyano-7-deazaguanine + ADP + phosphate + H2O + H(+). It participates in purine metabolism; 7-cyano-7-deazaguanine biosynthesis. Functionally, catalyzes the ATP-dependent conversion of 7-carboxy-7-deazaguanine (CDG) to 7-cyano-7-deazaguanine (preQ(0)). The polypeptide is 7-cyano-7-deazaguanine synthase (Azoarcus sp. (strain BH72)).